Consider the following 106-residue polypeptide: Large ribosomal subunit protein eL42 (106 aa).

The protein belongs to the eukaryotic ribosomal protein eL42 family.

This chain is Large ribosomal subunit protein eL42 (RPL44), found in Schwanniomyces occidentalis (Yeast).